The primary structure comprises 94 residues: Large ribosomal subunit protein eL33 (94 aa).

This sequence belongs to the eukaryotic ribosomal protein eL33 family.

The sequence is that of Large ribosomal subunit protein eL33 from Aeropyrum pernix (strain ATCC 700893 / DSM 11879 / JCM 9820 / NBRC 100138 / K1).